The sequence spans 1593 residues: Laminin subunit gamma-1 (1593 aa).

The signal sequence occupies residues Met-1–Gly-19. Residues Arg-30–Arg-269 form the Laminin N-terminal domain. 2 N-linked (GlcNAc...) asparagine glycosylation sites follow: Asn-44 and Asn-118. Intrachain disulfides connect Cys-270/Cys-279, Cys-272/Cys-289, Cys-291/Cys-300, Cys-303/Cys-323, Cys-326/Cys-335, Cys-328/Cys-351, Cys-354/Cys-363, Cys-366/Cys-379, Cys-382/Cys-394, Cys-384/Cys-400, Cys-402/Cys-411, Cys-414/Cys-426, Cys-429/Cys-440, Cys-431/Cys-447, Cys-449/Cys-458, and Cys-461/Cys-476. 4 consecutive Laminin EGF-like domains span residues Cys-270–Pro-325, Cys-326–Ser-381, Cys-382–Pro-428, and Cys-429–Pro-478. Residues Arg-505–Lys-673 enclose the Laminin IV type A domain. Residues Asn-560, Asn-634, and Asn-654 are each glycosylated (N-linked (GlcNAc...) asparagine). 24 cysteine pairs are disulfide-bonded: Cys-708-Cys-717, Cys-710-Cys-724, Cys-726-Cys-735, Cys-738-Cys-754, Cys-757-Cys-765, Cys-759-Cys-776, Cys-779-Cys-788, Cys-791-Cys-809, Cys-812-Cys-826, Cys-814-Cys-833, Cys-836-Cys-845, Cys-848-Cys-865, Cys-868-Cys-882, Cys-870-Cys-889, Cys-891-Cys-900, Cys-903-Cys-916, Cys-919-Cys-931, Cys-921-Cys-938, Cys-940-Cys-949, Cys-952-Cys-964, Cys-967-Cys-979, Cys-969-Cys-985, Cys-987-Cys-996, and Cys-999-Cys-1012. 6 Laminin EGF-like domains span residues Cys-708–Ala-756, Cys-757–Ala-811, Cys-812–Pro-867, Cys-868–Arg-918, Cys-919–Pro-966, and Cys-967–Gln-1014. N-linked (GlcNAc...) asparagine glycosylation is found at Asn-1006, Asn-1091, Asn-1159, Asn-1189, Asn-1207, Asn-1254, Asn-1364, and Asn-1379. Positions Gln-1014–Pro-1593 are domain II and I. The stretch at Leu-1021–Leu-1580 forms a coiled coil.

In terms of assembly, laminin is a complex glycoprotein, consisting of three different polypeptide chains (alpha, beta, gamma), which are bound to each other by disulfide bonds into a cross-shaped molecule comprising one long and three short arms with globules at each end.

It is found in the secreted. It localises to the extracellular space. The protein resides in the extracellular matrix. Its subcellular location is the basement membrane. Its function is as follows. Binding to cells via a high affinity receptor, laminin is thought to mediate the attachment, migration and organization of cells into tissues during embryonic development by interacting with other extracellular matrix components. The sequence is that of Laminin subunit gamma-1 (lamc1) from Danio rerio (Zebrafish).